The primary structure comprises 303 residues: Indole-3-glycerol phosphate synthase (303 aa).

The protein belongs to the TrpC family.

It catalyses the reaction 1-(2-carboxyphenylamino)-1-deoxy-D-ribulose 5-phosphate + H(+) = (1S,2R)-1-C-(indol-3-yl)glycerol 3-phosphate + CO2 + H2O. It participates in amino-acid biosynthesis; L-tryptophan biosynthesis; L-tryptophan from chorismate: step 4/5. The chain is Indole-3-glycerol phosphate synthase from Acaryochloris marina (strain MBIC 11017).